A 481-amino-acid polypeptide reads, in one-letter code: F-box/FBD/LRR-repeat protein At5g18770 (481 aa).

The F-box domain occupies 23-69 (EDMISALPDHLLCHILIFLSTDESVLTSVLSSRWRNLWKWVPRLDLN). LRR repeat units follow at residues 126–153 (KPNV…TLSA), 159–185 (CLKL…YLED), 186–211 (VVFP…KLSL), 214–234 (DDVV…TLKR), 236–261 (VPVY…SLID), 289–314 (DELS…TISW), and 340–368 (ATMS…HFTL). The region spanning 378 to 430 (VITGFSRVLPRCLVFSLESVEMESPITEKATELKLVRYFLENSATLKKLVLLL) is the FBD domain.

The chain is F-box/FBD/LRR-repeat protein At5g18770 from Arabidopsis thaliana (Mouse-ear cress).